The primary structure comprises 125 residues: Small ribosomal subunit protein uS13 (125 aa).

The tract at residues 92–125 (RRSLPARGQNTQTNARTRKGRRKTVAGKKKAVKK) is disordered. The segment covering 107–125 (RTRKGRRKTVAGKKKAVKK) has biased composition (basic residues).

Belongs to the universal ribosomal protein uS13 family. In terms of assembly, part of the 30S ribosomal subunit. Forms a loose heterodimer with protein S19. Forms two bridges to the 50S subunit in the 70S ribosome.

Located at the top of the head of the 30S subunit, it contacts several helices of the 16S rRNA. In the 70S ribosome it contacts the 23S rRNA (bridge B1a) and protein L5 of the 50S subunit (bridge B1b), connecting the 2 subunits; these bridges are implicated in subunit movement. Contacts the tRNAs in the A and P-sites. The sequence is that of Small ribosomal subunit protein uS13 from Chlorobium phaeobacteroides (strain BS1).